Reading from the N-terminus, the 383-residue chain is L-lactate dehydrogenase (383 aa).

In terms of domain architecture, FMN hydroxy acid dehydrogenase spans 1 to 380 (MIISSTFDYR…THESLASTDA (380 aa)). Y24 contributes to the substrate binding site. FMN contacts are provided by S106 and Q127. Y129 provides a ligand contact to substrate. T155 serves as a coordination point for FMN. R164 lines the substrate pocket. K251 is an FMN binding site. The Proton acceptor role is filled by H275. Residue R278 coordinates substrate. 306–330 (DSGVRSGLDVVRMIAQGADAVMIGR) is a binding site for FMN.

The protein belongs to the FMN-dependent alpha-hydroxy acid dehydrogenase family. FMN serves as cofactor.

The protein resides in the cell inner membrane. It catalyses the reaction (S)-lactate + A = pyruvate + AH2. Catalyzes the conversion of L-lactate to pyruvate. Is coupled to the respiratory chain. The polypeptide is L-lactate dehydrogenase (Bartonella quintana (strain Toulouse) (Rochalimaea quintana)).